We begin with the raw amino-acid sequence, 160 residues long: Large ribosomal subunit protein bL9 (160 aa).

The protein belongs to the bacterial ribosomal protein bL9 family.

Its function is as follows. Binds to the 23S rRNA. The sequence is that of Large ribosomal subunit protein bL9 from Neorickettsia sennetsu (strain ATCC VR-367 / Miyayama) (Ehrlichia sennetsu).